A 307-amino-acid polypeptide reads, in one-letter code: 4-hydroxy-tetrahydrodipicolinate synthase (307 aa).

Pyruvate is bound at residue Ser-57. The Proton donor/acceptor role is filled by Tyr-145. Lys-173 functions as the Schiff-base intermediate with substrate in the catalytic mechanism. A pyruvate-binding site is contributed by Ile-219.

It belongs to the DapA family. As to quaternary structure, homotetramer; dimer of dimers.

The protein resides in the cytoplasm. It carries out the reaction L-aspartate 4-semialdehyde + pyruvate = (2S,4S)-4-hydroxy-2,3,4,5-tetrahydrodipicolinate + H2O + H(+). It functions in the pathway amino-acid biosynthesis; L-lysine biosynthesis via DAP pathway; (S)-tetrahydrodipicolinate from L-aspartate: step 3/4. In terms of biological role, catalyzes the condensation of (S)-aspartate-beta-semialdehyde [(S)-ASA] and pyruvate to 4-hydroxy-tetrahydrodipicolinate (HTPA). The chain is 4-hydroxy-tetrahydrodipicolinate synthase from Polynucleobacter asymbioticus (strain DSM 18221 / CIP 109841 / QLW-P1DMWA-1) (Polynucleobacter necessarius subsp. asymbioticus).